A 93-amino-acid polypeptide reads, in one-letter code: Sm-like protein LSM2 (93 aa).

The 75-residue stretch at L2–G76 folds into the Sm domain.

This sequence belongs to the snRNP Sm proteins family. Component of the heptameric LSM1-LSM7 complex that forms a seven-membered ring structure with a donut shape. The LSM subunits are arranged in the order LSM1, LSM2, LSM3, LSM6, LSM5, LSM7 and LSM4. LSM2 subunit interacts only with its two neighboring subunits, LSM1A or LSM1B and LSM3A or LSM3B. Component of the heptameric LSM2-LSM8 complex that forms a seven-membered ring structure with a donut shape. The LSM subunits are arranged in the order LSM8, LSM2, LSM3, LSM6, LSM5, LSM7 and LSM4. LSM2 subunit interacts only with its two neighboring subunits, LSM8 and LSM3A or LSM3B. In terms of tissue distribution, expressed in roots, leaves, stems, flowers and siliques.

It localises to the cytoplasm. It is found in the nucleus. Its function is as follows. Component of LSM protein complexes, which are involved in RNA processing. Component of the cytoplasmic LSM1-LSM7 complex which is involved in mRNA degradation by promoting decapping and leading to accurate 5'-3' mRNA decay. The cytoplasmic LSM1-LSM7 complex regulates developmental gene expression by the decapping of specific development-related transcripts. Component of the nuclear LSM2-LSM8 complex which is involved splicing nuclear mRNAs. LSM2-LSM8 binds directly to the U6 small nuclear RNAs (snRNAs) and is essential for accurate splicing of selected development-related mRNAs through the stabilization of the spliceosomal U6 snRNA. Plays a critical role in the regulation of development-related gene expression. This chain is Sm-like protein LSM2, found in Arabidopsis thaliana (Mouse-ear cress).